Consider the following 430-residue polypeptide: MLRMRVRPPSAIPVFLIFVLLPFVLTSKPITPHYGPGHITSDWCGFGDSRSDCGNQHTPKSLDIPQELCPKFSSRTGSSMFISMHWNNDSDFNAFGYSNCGVEKVFYEGVNFSPYRNYTCYQEGSFGWVSNKVGFYSKLYSMASTSRCIKLINLDPPTNFTNYRNGTCTGNGGTAKMPDNPQLVIFNSVVKVSTQFVLPSSSDGFSCTKHLVPFCYIDGGCFEMSGVCYPFGYYYQSPSFYHAFYTNGTAGLHRYICDYLEMKPGVYNATTFGKFLIYPTKSYCMDTMNYTVPVQAVQSIWSENRQSDDAIGQACKSPYCIFYNKTKPYLAPNGADENHGDEEVRQMMQGLLVNSSCVSPQGSTPLALYSSEMIYTPNYGSCPQYYKLFETSSDENVDVTSSAYFVATWVLLVLVIILIFILISFCLSSY.

The N-terminal stretch at 1–27 (MLRMRVRPPSAIPVFLIFVLLPFVLTS) is a signal peptide. Residues 16-133 (LIFVLLPFVL…GSFGWVSNKV (118 aa)) form an esterase domain first part region. Residues 28–404 (KPITPHYGPG…ENVDVTSSAY (377 aa)) lie on the Virion surface side of the membrane. The active-site Nucleophile is serine 49. Cysteine 53 and cysteine 69 are disulfide-bonded. Asparagine 88, asparagine 117, asparagine 159, asparagine 165, asparagine 247, asparagine 268, and asparagine 289 each carry an N-linked (GlcNAc...) asparagine; by host glycan. 3 disulfides stabilise this stretch: cysteine 120–cysteine 168, cysteine 207–cysteine 284, and cysteine 215–cysteine 257. The tract at residues 134–274 (GFYSKLYSMA…GVYNATTFGK (141 aa)) is receptor binding. The segment at 275-390 (FLIYPTKSYC…SCPQYYKLFE (116 aa)) is esterase domain second part. An intrachain disulfide couples cysteine 315 to cysteine 320. N-linked (GlcNAc...) asparagine; by host glycosylation occurs at asparagine 324. Active-site charge relay system residues include aspartate 336 and histidine 339. A glycan (N-linked (GlcNAc...) asparagine; by host) is linked at asparagine 354. Residues cysteine 357 and cysteine 382 are joined by a disulfide bond. Residues 405-425 (FVATWVLLVLVIILIFILISF) traverse the membrane as a helical segment. Residues 426–430 (CLSSY) lie on the Intravirion side of the membrane.

The protein belongs to the influenza type C/coronaviruses hemagglutinin-esterase family. In terms of processing, N-glycosylated.

It is found in the virion membrane. Its subcellular location is the host cell membrane. The catalysed reaction is N-acetyl-9-O-acetylneuraminate + H2O = N-acetylneuraminate + acetate + H(+). It carries out the reaction N-acetyl-4-O-acetylneuraminate + H2O = N-acetylneuraminate + acetate + H(+). Its function is as follows. Structural protein that makes short spikes at the surface of the virus. Contains receptor binding and receptor-destroying activities. Mediates de-O-acetylation of N-acetyl-9-O-acetylneuraminic acid, which is probably the receptor determinant recognized by the virus on the surface of erythrocytes and susceptible cells. This receptor-destroying activity is important for virus release as it probably helps preventing self-aggregation and ensures the efficient spread of the progeny virus from cell to cell. May serve as a secondary viral attachment protein for initiating infection, the spike protein being the major one. Seems to be a 'luxury' protein that is not absolutely necessary for virus infection in culture. However, its presence in the virus may alter its pathogenicity. May become a target for both the humoral and the cellular branches of the immune system. This chain is Hemagglutinin-esterase (HE), found in Porcine torovirus (strain P10) (PoTV).